The primary structure comprises 352 residues: Thiosulfate transporter TsuA (352 aa).

Residues 1–21 (MFSMILSGLICGALLGFVMQR) traverse the membrane as a helical segment. Residues 22–44 (GRFCLTGGFRDMYIVKNNRMFYA) lie on the Cytoplasmic side of the membrane. Residues 45-65 (LLIAISVQSVGVFALIQAGLL) form a helical membrane-spanning segment. Over 66-70 (TYEAG) the chain is Periplasmic. Residues 71–91 (AFPWLGTVIGGYIFGLGIVLA) traverse the membrane as a helical segment. Over 92–102 (GGCATGTWYRA) the chain is Cytoplasmic. A helical transmembrane segment spans residues 103 to 123 (GEGLIGSWIALFTYMVMSAVM). Topologically, residues 124 to 148 (RSPHASGLNQTLQHYSTEHNSIAET) are periplasmic. Residues 149-169 (FNLSVWPLVAVLLVITLWVVM) form a helical membrane-spanning segment. Residues 170 to 197 (KELKKPKLKVATLPPRRTGIAHILFEKR) lie on the Cytoplasmic side of the membrane. The chain crosses the membrane as a helical span at residues 198–218 (WHPFVTAVLIGLIALLAWPLS). Over 219 to 247 (EATGRMFGLGITSPTANILQFLVAGDMKY) the chain is Periplasmic. The chain crosses the membrane as a helical span at residues 248-268 (INWGVFLVLGIFVGSFIAAKA). At 269–289 (SREFRVRAADAQTTLRSGLGG) the chain is on the cytoplasmic side. The chain crosses the membrane as a helical span at residues 290 to 310 (VLMGFGASIAGGCSIGNGLVM). At 311-317 (TAMMTWQ) the chain is on the periplasmic side. The helical transmembrane segment at 318 to 338 (GWIGLVFMILGVWTASWLVYV) threads the bilayer. The Cytoplasmic portion of the chain corresponds to 339–352 (RPQRKARLATAAAN).

Belongs to the TsuA/YedE (TC 9.B.102) family.

Its subcellular location is the cell inner membrane. It carries out the reaction thiosulfate(in) = thiosulfate(out). Functionally, mediates thiosulfate uptake. The polypeptide is Thiosulfate transporter TsuA (Escherichia coli (strain K12)).